We begin with the raw amino-acid sequence, 273 residues long: HTH-type transcriptional activator RhaS (273 aa).

Residues 174 to 272 form the HTH araC/xylS-type domain; it reads YQLLDWLQNN…SQSPRDLRSQ (99 aa). DNA-binding regions (H-T-H motif) lie at residues 191–212 and 239–262; these read PELADRFALPLRTLHRQLKNKT and VTDIAYLCGFGDSNHFSTLFKREF.

In terms of assembly, binds DNA as a dimer.

It localises to the cytoplasm. Its function is as follows. Activates expression of the rhaBAD and rhaT operons. The chain is HTH-type transcriptional activator RhaS from Yersinia pseudotuberculosis serotype I (strain IP32953).